We begin with the raw amino-acid sequence, 1201 residues long: Transcription-repair-coupling factor (1201 aa).

The tract at residues 1 to 27 is disordered; sequence MRLLITLGPSGSTHGHSLHTDAGRRRG. The Helicase ATP-binding domain maps to 670–831; the sequence is DMQKPEPMDR…MSGVRDMSII (162 aa). 683–690 serves as a coordination point for ATP; it reads GDVGYGKT. The short motif at 784 to 787 is the DEEQ box element; the sequence is DEEQ. In terms of domain architecture, Helicase C-terminal spans 852-1006; sequence VVKEAIEREV…GFSIASHDLE (155 aa).

This sequence in the N-terminal section; belongs to the UvrB family. In the C-terminal section; belongs to the helicase family. RecG subfamily.

It localises to the cytoplasm. Couples transcription and DNA repair by recognizing RNA polymerase (RNAP) stalled at DNA lesions. Mediates ATP-dependent release of RNAP and its truncated transcript from the DNA, and recruitment of nucleotide excision repair machinery to the damaged site. The polypeptide is Transcription-repair-coupling factor (Myxococcus xanthus).